Here is a 38-residue protein sequence, read N- to C-terminus: MKVYSSIKKRCEHCRIIRRKGKRFVICRVNPSHKQRQG.

The protein belongs to the bacterial ribosomal protein bL36 family.

The chain is Large ribosomal subunit protein bL36 from Chlorobium phaeobacteroides (strain BS1).